Reading from the N-terminus, the 509-residue chain is Cruciferin CRU1 (509 aa).

The first 23 residues, 1 to 23 (MVKVPHLLVATFGVLLVLNGCLA), serve as a signal peptide directing secretion. A disulfide bond links Cys37 and Cys70. Positions 42-271 (LDVLQPTETI…ALKIDVRLAQ (230 aa)) constitute a Cupin type-1 1 domain. Residues Ser53 and Ser97 each carry the phosphoserine modification. Cys113 and Cys326 are disulfide-bonded. Thr116 carries the phosphothreonine modification. Disordered stretches follow at residues 119 to 175 (DSQP…GFRD), 230 to 249 (RLAG…QQQN), and 301 to 321 (YESE…DNGL). A compositionally biased stretch (low complexity) spans 124–172 (QGQQQGQPWQGQQGQQGQQGQQGQQGQQGQQGQQGQQGQQGQQGQQQQG). The Cupin type-1 2 domain maps to 332-481 (ENIDDPARAD…AFQISLEEAR (150 aa)). Phosphoserine is present on Ser352. Phosphothreonine is present on residues Thr445 and Thr487.

It belongs to the 11S seed storage protein (globulins) family. Hexamer; each subunit is composed of an acidic and a basic chain derived from a single precursor and linked by a disulfide bond.

This is a seed storage protein. This chain is Cruciferin CRU1 (CRU1), found in Brassica napus (Rape).